The following is a 113-amino-acid chain: Iron-sulfur cluster insertion protein ErpA (113 aa).

Positions 41, 105, and 107 each coordinate iron-sulfur cluster.

This sequence belongs to the HesB/IscA family. In terms of assembly, homodimer. Requires iron-sulfur cluster as cofactor.

Required for insertion of 4Fe-4S clusters for at least IspG. This chain is Iron-sulfur cluster insertion protein ErpA, found in Hydrogenovibrio crunogenus (strain DSM 25203 / XCL-2) (Thiomicrospira crunogena).